An 85-amino-acid polypeptide reads, in one-letter code: MKTIFTVGAVVLATCLLSGCVNEQKVNQLASNVQTLNAKIARLEQDMKALRPQIYAAKSEANRANTRLDAQDYFDCLRCLRMYAE.

Positions 1–19 are cleaved as a signal peptide; that stretch reads MKTIFTVGAVVLATCLLSG. The N-palmitoyl cysteine moiety is linked to residue Cys20. Cys20 is lipidated: S-diacylglycerol cysteine.

It localises to the cell outer membrane. This is an uncharacterized protein from Escherichia coli (strain K12).